A 337-amino-acid chain; its full sequence is Mitochondrial amidoxime-reducing component 1 (337 aa).

The N-myristoyl glycine moiety is linked to residue glycine 2. Residues 2–20 (GAAGSSALARFVLLAQSRP) are Mitochondrial matrix-facing. Residues 21-40 (GWLGVAALGLTAVALGAVAW) form a helical; Signal-anchor for type II membrane protein membrane-spanning segment. The Cytoplasmic segment spans residues 41–337 (RRAWPTRRRR…VGDPVYLLGQ (297 aa)). 3 residues coordinate Mo-molybdopterin: lysine 67, serine 68, and arginine 92. An MOSC N-terminal region region spans residues 93–183 (FWLVINQEGN…KSQPYRLVHF (91 aa)). The MOSC domain maps to 187 to 335 (MRPRRPHQIA…IKVGDPVYLL (149 aa)). The Mo-molybdopterin site is built by threonine 210, serine 211, arginine 238, asparagine 240, serine 271, arginine 272, cysteine 273, and tyrosine 317.

In terms of assembly, component of a complex composed of cytochrome b5, NADH-cytochrome b5 reductase and MTARC1. It depends on Mo-molybdopterin as a cofactor.

It localises to the mitochondrion outer membrane. Its subcellular location is the membrane. The catalysed reaction is N(omega)-hydroxy-L-arginine + 2 Fe(II)-[cytochrome b5] + 2 H(+) = L-arginine + 2 Fe(III)-[cytochrome b5] + H2O. Catalyzes the reduction of N-oxygenated molecules, acting as a counterpart of cytochrome P450 and flavin-containing monooxygenases in metabolic cycles. As a component of prodrug-converting system, reduces a multitude of N-hydroxylated prodrugs particularly amidoximes, leading to increased drug bioavailability. May be involved in mitochondrial N(omega)-hydroxy-L-arginine (NOHA) reduction, regulating endogenous nitric oxide levels and biosynthesis. Postulated to cleave the N-OH bond of N-hydroxylated substrates in concert with electron transfer from NADH to cytochrome b5 reductase then to cytochrome b5, the ultimate electron donor that primes the active site for substrate reduction. The chain is Mitochondrial amidoxime-reducing component 1 from Homo sapiens (Human).